The primary structure comprises 2925 residues: MAEITLDRTLVLLSSEKQRERSEGLAVSLFVLIVVFVIDPCISSRSSLNDKACHKIFESLFRFISSEKSLYNRGNSKGPSASRLSTCASVLRLAVDALLHNLRAKSVRAVVDHITETLQDTGGSLFELLGVDYTKCLTALLNYPPHVEHLGASEWEKLMGFCLKIMNTQDYEDDRSHTGSDSRSTLDDFLGTGGTPTPSRSMPTLTAREKPKRDKGAISEAVVCIQLLTASVNAPVQEPAAKILHGLVGYVKSSHITGSGHQSAFNSINSVIMRVLSDQSELVQSILLDLIPVICHLWATKLVGLKDELLVTIMLCIVLLTAATRQEPSELLSRYTEDLLGALYKEYIKRPEKDILQVDELVFHQKTSAAVDKILIWPRLESGKSEHNWTVIWAIANLVDLSEEITARSSSPRTSTETLNKRQRLTSMVDEIHRDCASSSGARRVCALQLIPLIPRHHASVDSKSSLLLRLLPNILDENGILASWTMITIASLAGSPNADSPSLRAIWQQAWELTCRASTSQATSRASCILMNSILEYNLLEYSIVAEATSSMLTSVNLNGPSTMSDASLTLWATTTRMTARVNPGSLPNASKQICAWLREVWVIGTVTDRTQLAQLAAFARPLDLLNLLLACTNRHYIPPKPQFRGATSLIAKGWHFLHRSKQLLNYLFQLGGILDFDMWDTDDTIHLETFPRQDPNDNMVLDLLQVKSEMFLQAFQSLYEDKSHHVTVEIVQIVTSFCILVALYTECLPHLSASKFHNLQQNCERLWEIICTFLASHELEFIQGCLVVLSPFLNPEQFSYNPESTISKALLRLVIPLVSLLEAYRRSQRDNLALHNDEPMDLDDTLFNSKDRLAEVTSIVKSNREALPLFQEFSSFQRCITIQLSVLQKTNAFLRNHDQHSSRALVEYLIDLDEVDILAASNSLPYVYRAISGMDRTSLLDILEDLAEKCLQTYELERCEASHLLCIHMMHSFVKAWVSSEADSLSGSASDIYTWFRDVLLAKDMASPSVLVVFSELLVDVINTNASYSSGESNTSPRTSLLKILEKGSIPVKFDVGNLIPRLFGHYSLNDHDAIFNDVLRHLPKESDWVEGIALRLFILGQLASRWHTLLRRSIYHMFETPAHVPHSLQYAEKCICDVANKLGLKDAKELFRLFSSQILYTWTEQESITAMPFSIFSYASIKDMLGDVQDELVGQIIMRAREDEEIEMSKYMGKPFVDLLATSFYKAEAYSIARDISTPPGQGSQPKGVETRLKKILGTEQFMELIDQQFPQTIAAFFGSLDQYEQVERALSKRAKFHDALDGLRCILGKSASKIVLPANQQPSFRARYLIDELEFLCKRSGYELETIWTPTLASYVCRTLLESIHPALGSFHACSVIRKIRVLLCVAGSVMLRDYPFEMTLHAMLPFLVDIYCSEDALGIFWYLLEAGQPYLAETPGLMAGVAVSTLLSLKKFLASPPVDTAQQGQSKIVTANIERFLQWFGEYINTYESSLDAETQESFRRVVKSSQATSTVESHSDDSNERDVILEILDDRSSERSLLSKTVSDHVIALLCADSEEPLGNYHKLNESDRDATANIVAIYQTLQSFNTGSGYRLWAAKVIGRAFATTGKVCDALLREQDLSLFKSQLSDLRLEVHCYSKASILQELCNMLQNNSHLEVGLVERTLQLIISNLARYPDFEQCAGVVPLYLMKAFTWDPYQCPPIPTLAPETERDDAKVNWQTSNSLSQWARGIALFLSKSAAEDPVIGSLSHIIYVIPELAVRILPYMLHDVLLAELKGEANIRQKVSQIFKQALCDVHDTTISHARLAIDCILYLRNQPKPNEATIVERDEWLEIDFAEASLAASRCRLPKTALIFLEIHASRVIFGSRRSSLAKYEAPPDMLHDIFKDIDDPDFFYGIQQSPSLDSVMERLQHESSGFKNLLFQSAQYDSEIQMSADQNAYGVLKALNSTNLQGIANSIFSASGGGFVDTSSSFDSMLQAATNLRQWDIPVSPLNPSPPATVFRAFQSLNTSGSLAEASKSINECLLTTLESLTSASRSAMSLRTAMRVLGVITEVSDVLDARSTEEIDHEWQKIAARDSWLKTTSVHEIGEILNSHEALFSSINRKSYLRSSTNISDHDAQLLEVKAIRQSLHITRTQGIQQASLKSAVYLSKLAHQCSALGINIEGAAKFDLANVLWDQGEMTASIRMLHQLKDQNDLHKQAVPISRAELLVTLVSSLHIDSLRTKPCSFRTNSTSCKGHHVAEARLEKPETIIQDYLLTAVKELKGRSGGEEAGRVYHGFATFCDQQLQNPDGLEDFTRVEQLRNRKEKEVRALEDMMKAAEGREREALKFHRGRTKQWFDLDDREYQRLRRSREAFLQQCLENYLLCLRESETYNNDVLRFCALWLDKSDSDIANAAVSKHLGQVPSRKFAPLMNQLTSRLLDVPDEFQKMLFSLITRICVEHPFHGMYQIFASSKSKGGKDETALSRNRAAGRLVEGLKNDKRIGPTWVAVHNTNINYVRFAIDRPDEKLKSGARVPLRKLQTGGRLEQDAATQKLPPPTMNIEIRVDCDYRDVPKLVKYHPEFTIASGVSAPKIVSAFASNGLRYKQLFKGGNDDLRQDAIMEQVFEQVSNLLKDHQATRQRNLGIRTYKVLPLTSNAGIIEFVPHTIPLHDYLMPAHQKYYPKDMKPNVCRKHISDVQTRSFEQRVRTYRQVTEHFHPVMKYFFMEKFNNPDDWFSKRLSYTRSTAAISILGHVLGLGDRHGHNILLDERTGEVVHIDLGVAFEQGRVLPVPEVVPFRLTRDLVDGMGVTKTEGVFRRCCEFTLETLRRESYSIMTILDVLRYDPLYSWTVSPLRMKKMQDASEAGGGPPMLPGAADQRPSNEPSEADRALTVVAKKLGKTLSVTATVNELIQQATDEKNLAVLYCGWAAYA.

Residues 172 to 211 (EDDRSHTGSDSRSTLDDFLGTGGTPTPSRSMPTLTAREKP) form a disordered region. Positions 174–186 (DRSHTGSDSRSTL) are enriched in basic and acidic residues. The segment covering 195 to 204 (TPTPSRSMPT) has biased composition (polar residues). The region spanning 1844-2467 (EASLAASRCR…MYQIFASSKS (624 aa)) is the FAT domain. The PI3K/PI4K catalytic domain maps to 2571–2882 (YHPEFTIASG…PSNEPSEADR (312 aa)). The G-loop stretch occupies residues 2577–2583 (IASGVSA). A catalytic loop region spans residues 2749-2757 (GLGDRHGHN). The activation loop stretch occupies residues 2769-2793 (HIDLGVAFEQGRVLPVPEVVPFRLT). Residues 2853–2879 (QDASEAGGGPPMLPGAADQRPSNEPSE) form a disordered region. The FATC domain maps to 2893-2925 (KTLSVTATVNELIQQATDEKNLAVLYCGWAAYA).

It belongs to the PI3/PI4-kinase family. ATM subfamily. In terms of assembly, associates with DNA double-strand breaks.

It is found in the nucleus. Its subcellular location is the chromosome. The protein resides in the telomere. It carries out the reaction L-seryl-[protein] + ATP = O-phospho-L-seryl-[protein] + ADP + H(+). It catalyses the reaction L-threonyl-[protein] + ATP = O-phospho-L-threonyl-[protein] + ADP + H(+). Functionally, serine/threonine protein kinase which activates checkpoint signaling upon genotoxic stresses such as ionizing radiation (IR), ultraviolet light (UV), or DNA replication stalling, thereby acting as a DNA damage sensor. Recognizes the substrate consensus sequence [ST]-Q. Phosphorylates histone H2A to form H2AS128ph (gamma-H2A) at sites of DNA damage, involved in the regulation of DNA damage response mechanism. Required for the control of telomere length and genome stability. The sequence is that of Serine/threonine-protein kinase tel1 (tel1) from Aspergillus oryzae (strain ATCC 42149 / RIB 40) (Yellow koji mold).